Consider the following 310-residue polypeptide: Ribosomal RNA small subunit methyltransferase H (310 aa).

S-adenosyl-L-methionine is bound by residues 32–34 (GGH), Asp-52, Phe-79, Asp-100, and Gln-107.

This sequence belongs to the methyltransferase superfamily. RsmH family.

The protein resides in the cytoplasm. The enzyme catalyses cytidine(1402) in 16S rRNA + S-adenosyl-L-methionine = N(4)-methylcytidine(1402) in 16S rRNA + S-adenosyl-L-homocysteine + H(+). Specifically methylates the N4 position of cytidine in position 1402 (C1402) of 16S rRNA. The protein is Ribosomal RNA small subunit methyltransferase H of Geobacillus thermodenitrificans (strain NG80-2).